We begin with the raw amino-acid sequence, 698 residues long: FHF complex subunit HOOK-interacting protein 2B (698 aa).

It belongs to the FHIP family.

This Xenopus tropicalis (Western clawed frog) protein is FHF complex subunit HOOK-interacting protein 2B (fhip2b).